The primary structure comprises 375 residues: LIM domain-binding protein 1 (375 aa).

Disordered regions lie at residues 248–294 (PPAE…TFAL) and 331–375 (DAAN…QASQ). Over residues 266–282 (SGGSTMSSGGGNTNNSN) the composition is skewed to low complexity. Residues 300–339 (DVMVVGEPTLMGGEFGDEDERLITRLENTQFDAANGIDDE) form the LIM interaction domain (LID) domain.

Belongs to the LDB family. Forms homodimers and heterodimers. Interacts with the LIM domain of LIM/homeobox factor lhx1/lim1, and with lhx3/lim3 and lhx5/lim5. Activates lhx1/lim1 by binding. The stoichiometry of lhx1/lim1 and ldb1 is important for their function and an excess of ldb1 can inhibit lhx1/lim1 function. When bound to lhx1/lim1, escapes degradation by rnf12. The N-terminus interacts with the N-terminal region of rnf12. Post-translationally, undergoes rnf12-mediated ubiquitin-proteasome-dependent degradation. Ubiquitously expressed in the early gastrula before localizing to the dorsal region of the vegetal hemisphere, which contains the Spemann organizer. Expressed in the CNS, pronephros and tail bud in neurula and tail-bud stage embryos. Expressed in multiple adult tissues including brain, heart, lung, stomach, intestine, liver, spleen, kidney, ovary, muscle and skin.

It localises to the nucleus. Binds to the LIM domain of a wide variety of LIM domain-containing transcription factors. Acts as a coactivator together with otx2 to stimulate lhx1/lim1-mediated activation of the gsc promoter in the Spemann organizer. Acts synergistically with lhx1/lim1 and ssbp in axis formation. The protein is LIM domain-binding protein 1 (ldb1) of Xenopus laevis (African clawed frog).